The following is a 469-amino-acid chain: Type II secretion system protein HxcR (469 aa).

An ATP-binding site is contributed by 246-253 (GPTGSGKT).

This sequence belongs to the GSP E family.

Its subcellular location is the cytoplasm. The enzyme catalyses ATP + H2O + cellular proteinSide 1 = ADP + phosphate + cellular proteinSide 2.. ATPase component of the type II secretion system required for the energy-dependent secretion of extracellular factors from the periplasm. Acts as a molecular motor to provide the energy that is required for the export of proteins. The Hxc system is involved in the secretion of low-molecular-weight alkaline phosphatase L-AP (LapA). Is probably also involved in the secretion of the phosphate-binding protein PstS. The protein is Type II secretion system protein HxcR of Pseudomonas aeruginosa (strain ATCC 15692 / DSM 22644 / CIP 104116 / JCM 14847 / LMG 12228 / 1C / PRS 101 / PAO1).